The sequence spans 612 residues: MDKNTIIGFILIFWVLFGFAYLNHNRPIQEQLEKNPPMSANSVKKEFSNPISEIQSSDIYGNFAASTKGTETFVTIQNALMEIKLSTKGGRIYSVRLKKYTNYKNEPLYLFEGDESAFNIIFISSNNKVLNSEDFYFEIVSNSELETILRLNAGKNRYIDFVYTLHPDDYMVDWKLVSHNIQTELSHSMHTLNIQWMQKIRQQEKGRKFEERYARLTYKFLTDDIEQLRETKDDVRNVPNKLKWIGYKDQFFSSVFIVHSNFESAKLDSKYLTYGAYIKEYSTSTSIPYNIANIEPIKFNFYFGPNDYSLLKSYDKTKLKEQNLELEKLVPLGWSLFRAINKCLIIPIFNWLTNGENVNLGLAILILTLIIKIALFPLTYKSFISSAKMRVLKPQVENINIKYSGQEKALIRQQKTMELYRQVGVNPMTGCFPILLQMPFLIALFMFFPSAIGLRHQSFLWANDLSTYDTLIQWSTDIPFIPRFLGNHISLFCLLMSLATILNTRYNTMYQQNIGQEQFPGMKLTMYFMPVVMFFFLNSYPAGLNYYYLISTLITIMQTIIFRGLVNELNLLAKLEANKKKSKLVKKKFGFMDRLEEFQRKQQELLKKKRKR.

7 consecutive transmembrane segments (helical) span residues 4 to 24 (NTII…YLNH), 329 to 349 (LVPL…IPIF), 358 to 378 (VNLG…LFPL), 434 to 454 (ILLQ…AIGL), 484 to 504 (FLGN…ILNT), 524 to 544 (LTMY…PAGL), and 546 to 566 (YYYL…RGLV).

It belongs to the OXA1/ALB3/YidC family. Type 1 subfamily. In terms of assembly, interacts with the Sec translocase complex via SecD. Specifically interacts with transmembrane segments of nascent integral membrane proteins during membrane integration.

It localises to the cell inner membrane. Its function is as follows. Required for the insertion and/or proper folding and/or complex formation of integral membrane proteins into the membrane. Involved in integration of membrane proteins that insert both dependently and independently of the Sec translocase complex, as well as at least some lipoproteins. Aids folding of multispanning membrane proteins. The chain is Membrane protein insertase YidC from Azobacteroides pseudotrichonymphae genomovar. CFP2.